Consider the following 66-residue polypeptide: MDISGMQINEVQSKLKEYYNVLKMARKPDWEEFSMTAKVALAVMFIVGFVGFVIYILMEILPGALK.

Residues 41 to 61 (LAVMFIVGFVGFVIYILMEIL) form a helical membrane-spanning segment.

It belongs to the SecE/SEC61-gamma family. Component of the Sec protein translocase complex. Heterotrimer consisting of SecY (alpha), SecG (beta) and SecE (gamma) subunits. The heterotrimers can form oligomers, although 1 heterotrimer is thought to be able to translocate proteins. Interacts with the ribosome. May interact with SecDF, and other proteins may be involved.

The protein localises to the cell membrane. Its function is as follows. Essential subunit of the Sec protein translocation channel SecYEG. Clamps together the 2 halves of SecY. May contact the channel plug during translocation. In Archaeoglobus fulgidus (strain ATCC 49558 / DSM 4304 / JCM 9628 / NBRC 100126 / VC-16), this protein is Protein translocase subunit SecE.